Reading from the N-terminus, the 446-residue chain is ATP-dependent protease ATPase subunit HslU (446 aa).

Residues V18, 60 to 65 (GVGKTE), D259, E324, and R396 each bind ATP.

Belongs to the ClpX chaperone family. HslU subfamily. As to quaternary structure, a double ring-shaped homohexamer of HslV is capped on each side by a ring-shaped HslU homohexamer. The assembly of the HslU/HslV complex is dependent on binding of ATP.

It localises to the cytoplasm. Its function is as follows. ATPase subunit of a proteasome-like degradation complex; this subunit has chaperone activity. The binding of ATP and its subsequent hydrolysis by HslU are essential for unfolding of protein substrates subsequently hydrolyzed by HslV. HslU recognizes the N-terminal part of its protein substrates and unfolds these before they are guided to HslV for hydrolysis. The polypeptide is ATP-dependent protease ATPase subunit HslU (Dechloromonas aromatica (strain RCB)).